The sequence spans 321 residues: Torsin-2A (321 aa).

An N-terminal signal peptide occupies residues 1–26 (MAVARHGYRPWGSILGLLGLALAAAA). 93–100 (GWTGTGKS) contributes to the ATP binding site. An N-linked (GlcNAc...) asparagine glycan is attached at Asn-149.

This sequence belongs to the ClpA/ClpB family. Torsin subfamily. As to quaternary structure, homohexamer. Interacts with TOR1AIP1. Post-translationally, N-glycosylated. Expressed at similar levels in liver, muscle and brain (at protein level).

Its subcellular location is the endoplasmic reticulum lumen. This Mus musculus (Mouse) protein is Torsin-2A (Tor2a).